A 204-amino-acid chain; its full sequence is MDAQTKIIRASHMIDMNDIIREGNPTLRAVAEDVTLPLSDEDIILGEKMMQFLRNSQDPVIAEKMGLRGGVGLAAPQLDISKRIIAVLVPNPEDAKGNPPKEAYSLQEIMYNPKVVAHSVQEAALGNGEGCLSVDRDVPGYVVRHARVTIEYFNKEGEKKRIKLRGYDSIVVQHEIDHTNGIMFYDRINKDNPFTIKDGLLIIE.

Fe cation is bound by residues cysteine 131 and histidine 174. Glutamate 175 is a catalytic residue. Histidine 178 contacts Fe cation.

It belongs to the polypeptide deformylase family. Fe(2+) serves as cofactor.

The catalysed reaction is N-terminal N-formyl-L-methionyl-[peptide] + H2O = N-terminal L-methionyl-[peptide] + formate. Its function is as follows. Removes the formyl group from the N-terminal Met of newly synthesized proteins. Requires at least a dipeptide for an efficient rate of reaction. N-terminal L-methionine is a prerequisite for activity but the enzyme has broad specificity at other positions. This Streptococcus thermophilus (strain CNRZ 1066) protein is Peptide deformylase.